Consider the following 356-residue polypeptide: Probable cytosolic iron-sulfur protein assembly protein 1 (356 aa).

6 WD repeats span residues 34–73 (GHKRTVRSVAWSPNGEVLATASFDSTVGLWERIPENIRAE), 89–128 (GHDSECKSVAFSYNGNLLASCGRDKSVWVWEAQPDADYEC), 134–173 (EHSQDVKCVIWHPKEEILASASYDNTIKMYVDDPSCDWYC), 179–218 (AHSSTVWSLSFSPCGQFLASSSDDMTIWIWRRVSAAECVE), 244–291 (HFSG…ATLR), and 319–356 (AHGSVDVNCVKWAPMNTDGSAPTMIASAGDDGEIRIWT).

It belongs to the WD repeat CIA1 family.

In terms of biological role, essential component of the cytosolic iron-sulfur (Fe/S) protein assembly machinery. Required for the maturation of extramitochondrial Fe/S proteins. The protein is Probable cytosolic iron-sulfur protein assembly protein 1 of Malassezia globosa (strain ATCC MYA-4612 / CBS 7966) (Dandruff-associated fungus).